The chain runs to 346 residues: 4-amino-5-hydroxymethyl-2-methylpyrimidine phosphate synthase (346 aa).

An N6-(pyridoxal phosphate)lysine modification is found at K62. H66 is an active-site residue. 114–117 (GEFG) is a pyridoxal 5'-phosphate binding site. Positions 194–198 (CCCFC) match the CCCFC; essential for catalytic activity, may be the site of iron coordination motif.

The protein belongs to the NMT1/THI5 family. As to quaternary structure, homodimer. It depends on Fe cation as a cofactor.

The protein localises to the cytoplasm. It localises to the nucleus. The enzyme catalyses N(6)-(pyridoxal phosphate)-L-lysyl-[4-amino-5-hydroxymethyl-2-methylpyrimidine phosphate synthase] + L-histidyl-[4-amino-5-hydroxymethyl-2-methylpyrimidine phosphate synthase] + 2 Fe(3+) + 4 H2O = L-lysyl-[4-amino-5-hydroxymethyl-2-methylpyrimidine phosphate synthase] + (2S)-2-amino-5-hydroxy-4-oxopentanoyl-[4-amino-5-hydroxymethyl-2-methylpyrimidine phosphate synthase] + 4-amino-2-methyl-5-(phosphooxymethyl)pyrimidine + 3-oxopropanoate + 2 Fe(2+) + 2 H(+). It participates in cofactor biosynthesis; thiamine diphosphate biosynthesis. Functionally, responsible for the formation of the pyrimidine heterocycle in the thiamine biosynthesis pathway. Catalyzes the formation of hydroxymethylpyrimidine phosphate (HMP-P) from histidine and pyridoxal phosphate (PLP). The protein uses PLP and the active site histidine to form HMP-P, generating an inactive enzyme. The enzyme can only undergo a single turnover, which suggests it is a suicide enzyme. The chain is 4-amino-5-hydroxymethyl-2-methylpyrimidine phosphate synthase from Schizosaccharomyces pombe (strain 972 / ATCC 24843) (Fission yeast).